Consider the following 596-residue polypeptide: Arginine--tRNA ligase (596 aa).

Residues 139–149 (ANPTGPLHVGH) carry the 'HIGH' region motif.

The protein belongs to the class-I aminoacyl-tRNA synthetase family. In terms of assembly, monomer.

It localises to the cytoplasm. It catalyses the reaction tRNA(Arg) + L-arginine + ATP = L-arginyl-tRNA(Arg) + AMP + diphosphate. This chain is Arginine--tRNA ligase, found in Paraburkholderia phytofirmans (strain DSM 17436 / LMG 22146 / PsJN) (Burkholderia phytofirmans).